A 244-amino-acid chain; its full sequence is Ureidoacrylate amidohydrolase RutB (244 aa).

Asp-38 serves as the catalytic Proton acceptor. Lys-147 is a catalytic residue. The active-site Nucleophile is Cys-180.

It belongs to the isochorismatase family. RutB subfamily.

The catalysed reaction is (Z)-3-ureidoacrylate + H2O + H(+) = (Z)-3-aminoacrylate + NH4(+) + CO2. The enzyme catalyses (Z)-3-ureidoacrylate + H2O = (Z)-3-aminoacrylate + carbamate + H(+). It carries out the reaction (Z)-2-methylureidoacrylate + H2O + H(+) = (Z)-2-methylaminoacrylate + NH4(+) + CO2. Hydrolyzes ureidoacrylate to form aminoacrylate and carbamate. The carbamate hydrolyzes spontaneously, thereby releasing one of the nitrogen atoms of the pyrimidine ring as ammonia and one of its carbon atoms as CO2. The protein is Ureidoacrylate amidohydrolase RutB of Escherichia coli O6:H1 (strain CFT073 / ATCC 700928 / UPEC).